The primary structure comprises 162 residues: Xanthine-guanine phosphoribosyltransferase (162 aa).

Residues 43-44 (RG) and 94-102 (DDLVDTGTT) each bind 5-phospho-alpha-D-ribose 1-diphosphate. Residue D95 participates in Mg(2+) binding. Positions 98 and 141 each coordinate guanine. Xanthine-binding residues include D98 and I141. GMP is bound by residues 98–102 (DTGTT) and 140–141 (WI).

Belongs to the purine/pyrimidine phosphoribosyltransferase family. XGPT subfamily. Homotetramer. Requires Mg(2+) as cofactor.

The protein resides in the cell inner membrane. It catalyses the reaction GMP + diphosphate = guanine + 5-phospho-alpha-D-ribose 1-diphosphate. The catalysed reaction is XMP + diphosphate = xanthine + 5-phospho-alpha-D-ribose 1-diphosphate. The enzyme catalyses IMP + diphosphate = hypoxanthine + 5-phospho-alpha-D-ribose 1-diphosphate. Its pathway is purine metabolism; GMP biosynthesis via salvage pathway; GMP from guanine: step 1/1. It functions in the pathway purine metabolism; XMP biosynthesis via salvage pathway; XMP from xanthine: step 1/1. Functionally, purine salvage pathway enzyme that catalyzes the transfer of the ribosyl-5-phosphate group from 5-phospho-alpha-D-ribose 1-diphosphate (PRPP) to the N9 position of the 6-oxopurines guanine and xanthine to form the corresponding ribonucleotides GMP (guanosine 5'-monophosphate) and XMP (xanthosine 5'-monophosphate), with the release of PPi. To a lesser extent, also acts on hypoxanthine. The chain is Xanthine-guanine phosphoribosyltransferase from Oleidesulfovibrio alaskensis (strain ATCC BAA-1058 / DSM 17464 / G20) (Desulfovibrio alaskensis).